The following is a 216-amino-acid chain: MAADSQTPWLLTFSLLCLLWPQEAGAFPAMPLSSLFANAVLRAQHLHQLAADTYKEFERAYIPEGQRYSIQNAQAAFCFSETIPAPTGKEEAQQRTDMELLRFSLLLIQSWLGPVQFLSRIFTNSLMFGTSDRVYEKLKDLEEGIQALMQELEDGSPRIGQILKQTYDKFDANMRSDDALLKNYGLLSCFKKDLHKAETYLRVMKCRRFAESSCAF.

The first 26 residues, 1 to 26 (MAADSQTPWLLTFSLLCLLWPQEAGA), serve as a signal peptide directing secretion. A Zn(2+)-binding site is contributed by histidine 45. A disulfide bridge connects residues cysteine 78 and cysteine 189. At serine 131 the chain carries Phosphoserine. Glutamate 198 serves as a coordination point for Zn(2+). A disulfide bridge links cysteine 206 with cysteine 214.

The protein belongs to the somatotropin/prolactin family.

It localises to the secreted. Its function is as follows. Plays an important role in growth control. Its major role in stimulating body growth is to stimulate the liver and other tissues to secrete IGF1. It stimulates both the differentiation and proliferation of myoblasts. It also stimulates amino acid uptake and protein synthesis in muscle and other tissues. In Rattus norvegicus (Rat), this protein is Somatotropin (Gh1).